The following is a 730-amino-acid chain: Catalase-peroxidase (730 aa).

A cross-link (tryptophyl-tyrosyl-methioninium (Trp-Tyr) (with M-244)) is located at residues 95 to 218 (WHSAGTYRVG…LAAVQMGLIY (124 aa)). His-96 (proton acceptor) is an active-site residue. A cross-link (tryptophyl-tyrosyl-methioninium (Tyr-Met) (with W-95)) is located at residues 218–244 (YVNPEGPNGNPDPLGSAHDVRETFARM). A heme b-binding site is contributed by His-259.

The protein belongs to the peroxidase family. Peroxidase/catalase subfamily. As to quaternary structure, homodimer or homotetramer. It depends on heme b as a cofactor. Formation of the three residue Trp-Tyr-Met cross-link is important for the catalase, but not the peroxidase activity of the enzyme.

It carries out the reaction H2O2 + AH2 = A + 2 H2O. The enzyme catalyses 2 H2O2 = O2 + 2 H2O. Functionally, bifunctional enzyme with both catalase and broad-spectrum peroxidase activity. The chain is Catalase-peroxidase from Clostridium botulinum (strain Eklund 17B / Type B).